A 138-amino-acid chain; its full sequence is Holo-[acyl-carrier-protein] synthase (138 aa).

Aspartate 8 and glutamate 54 together coordinate Mg(2+).

The protein belongs to the P-Pant transferase superfamily. AcpS family. It depends on Mg(2+) as a cofactor.

The protein localises to the cytoplasm. It carries out the reaction apo-[ACP] + CoA = holo-[ACP] + adenosine 3',5'-bisphosphate + H(+). Transfers the 4'-phosphopantetheine moiety from coenzyme A to a Ser of acyl-carrier-protein. This chain is Holo-[acyl-carrier-protein] synthase, found in Roseiflexus sp. (strain RS-1).